Reading from the N-terminus, the 153-residue chain is Aspartate carbamoyltransferase regulatory chain (153 aa).

Positions 109, 114, 138, and 141 each coordinate Zn(2+).

The protein belongs to the PyrI family. Contains catalytic and regulatory chains. Zn(2+) serves as cofactor.

Involved in allosteric regulation of aspartate carbamoyltransferase. In Edwardsiella ictaluri (strain 93-146), this protein is Aspartate carbamoyltransferase regulatory chain.